The primary structure comprises 80 residues: DNA-directed RNA polymerase subunit Rpo5 (80 aa).

This sequence belongs to the archaeal Rpo5/eukaryotic RPB5 RNA polymerase subunit family. As to quaternary structure, part of the RNA polymerase complex.

It is found in the cytoplasm. It catalyses the reaction RNA(n) + a ribonucleoside 5'-triphosphate = RNA(n+1) + diphosphate. DNA-dependent RNA polymerase (RNAP) catalyzes the transcription of DNA into RNA using the four ribonucleoside triphosphates as substrates. The protein is DNA-directed RNA polymerase subunit Rpo5 of Thermofilum pendens (strain DSM 2475 / Hrk 5).